Reading from the N-terminus, the 729-residue chain is Fatty acid oxidation complex subunit alpha (729 aa).

Residues 1–189 form an enoyl-CoA hydratase/isomerase region; the sequence is MLYQSETLQL…KIGLVDAVVD (189 aa). Substrate is bound at residue Asp-296. The segment at 311 to 729 is 3-hydroxyacyl-CoA dehydrogenase; it reads AAPKLAAVLG…LLDVSTNQPA (419 aa). Residues Met-324, Asp-343, 400 to 402, Lys-407, and Ser-429 each bind NAD(+); that span reads VVE. His-450 (for 3-hydroxyacyl-CoA dehydrogenase activity) is an active-site residue. Asn-453 provides a ligand contact to NAD(+). Asn-500 and Tyr-660 together coordinate substrate.

The protein in the N-terminal section; belongs to the enoyl-CoA hydratase/isomerase family. It in the C-terminal section; belongs to the 3-hydroxyacyl-CoA dehydrogenase family. As to quaternary structure, heterotetramer of two alpha chains (FadB) and two beta chains (FadA).

The enzyme catalyses a (3S)-3-hydroxyacyl-CoA + NAD(+) = a 3-oxoacyl-CoA + NADH + H(+). It catalyses the reaction a (3S)-3-hydroxyacyl-CoA = a (2E)-enoyl-CoA + H2O. It carries out the reaction a 4-saturated-(3S)-3-hydroxyacyl-CoA = a (3E)-enoyl-CoA + H2O. The catalysed reaction is (3S)-3-hydroxybutanoyl-CoA = (3R)-3-hydroxybutanoyl-CoA. The enzyme catalyses a (3Z)-enoyl-CoA = a 4-saturated (2E)-enoyl-CoA. It catalyses the reaction a (3E)-enoyl-CoA = a 4-saturated (2E)-enoyl-CoA. It functions in the pathway lipid metabolism; fatty acid beta-oxidation. Functionally, involved in the aerobic and anaerobic degradation of long-chain fatty acids via beta-oxidation cycle. Catalyzes the formation of 3-oxoacyl-CoA from enoyl-CoA via L-3-hydroxyacyl-CoA. It can also use D-3-hydroxyacyl-CoA and cis-3-enoyl-CoA as substrate. This is Fatty acid oxidation complex subunit alpha from Yersinia pestis bv. Antiqua (strain Antiqua).